The primary structure comprises 113 residues: Protein AaeX (113 aa).

A run of 2 helical transmembrane segments spans residues 3–23 and 43–63; these read LLPVMVIFGLSFPPVLFEMIL and FVWHPALFNTALYCCVFYLIS.

The protein belongs to the AaeX family.

It localises to the cell membrane. The chain is Protein AaeX from Sodalis glossinidius (strain morsitans).